We begin with the raw amino-acid sequence, 106 residues long: MRNQTKQHLEQLQITMQQLNLWQTMPPAAEAFLSEEPFSIDTMSAEEWLQWVFIPRMQALLESGSALPNKIAISPYIEEAMKEFNELQQLLTPLVALEELXNNNEC.

This sequence to the N-terminal of E.carotovora exoenzyme regulation regulon ORF1. The C-terminal part is colinear with YqcB. The protein to E.coli YqcC.

This is an uncharacterized protein from Haemophilus influenzae (strain ATCC 51907 / DSM 11121 / KW20 / Rd).